The chain runs to 226 residues: Urease accessory protein UreF (226 aa).

It belongs to the UreF family. In terms of assembly, ureD, UreF and UreG form a complex that acts as a GTP-hydrolysis-dependent molecular chaperone, activating the urease apoprotein by helping to assemble the nickel containing metallocenter of UreC. The UreE protein probably delivers the nickel.

The protein localises to the cytoplasm. Its function is as follows. Required for maturation of urease via the functional incorporation of the urease nickel metallocenter. The polypeptide is Urease accessory protein UreF (Burkholderia mallei (strain NCTC 10247)).